We begin with the raw amino-acid sequence, 537 residues long: Lysine--tRNA ligase (537 aa).

A 'HIGH' region motif is present at residues 30 to 38 (PSGNIHIGN). A 'KMSKS' region motif is present at residues 276–280 (AMSSS).

It belongs to the class-I aminoacyl-tRNA synthetase family.

The protein localises to the cytoplasm. The enzyme catalyses tRNA(Lys) + L-lysine + ATP = L-lysyl-tRNA(Lys) + AMP + diphosphate. This chain is Lysine--tRNA ligase, found in Methanosarcina barkeri (strain Fusaro / DSM 804).